We begin with the raw amino-acid sequence, 387 residues long: 1-deoxy-D-xylulose 5-phosphate reductoisomerase (387 aa).

Positions 10, 11, 12, 13, 36, 38, and 122 each coordinate NADPH. Residue lysine 123 coordinates 1-deoxy-D-xylulose 5-phosphate. NADPH is bound at residue glutamate 124. Aspartate 148 provides a ligand contact to Mn(2+). Serine 149, glutamate 150, serine 174, and histidine 197 together coordinate 1-deoxy-D-xylulose 5-phosphate. A Mn(2+)-binding site is contributed by glutamate 150. Glycine 203 provides a ligand contact to NADPH. 1-deoxy-D-xylulose 5-phosphate is bound by residues serine 210, asparagine 215, lysine 216, and glutamate 219. A Mn(2+)-binding site is contributed by glutamate 219.

This sequence belongs to the DXR family. Mg(2+) serves as cofactor. Requires Mn(2+) as cofactor.

It catalyses the reaction 2-C-methyl-D-erythritol 4-phosphate + NADP(+) = 1-deoxy-D-xylulose 5-phosphate + NADPH + H(+). Its pathway is isoprenoid biosynthesis; isopentenyl diphosphate biosynthesis via DXP pathway; isopentenyl diphosphate from 1-deoxy-D-xylulose 5-phosphate: step 1/6. Catalyzes the NADPH-dependent rearrangement and reduction of 1-deoxy-D-xylulose-5-phosphate (DXP) to 2-C-methyl-D-erythritol 4-phosphate (MEP). The chain is 1-deoxy-D-xylulose 5-phosphate reductoisomerase from Chloroherpeton thalassium (strain ATCC 35110 / GB-78).